The following is a 943-amino-acid chain: Translation initiation factor IF-2 (943 aa).

Disordered stretches follow at residues 96-229 (FIKR…ERRR) and 243-352 (AAPK…QRQQ). Over residues 104 to 116 (DAPSDAAESAPSA) the composition is skewed to low complexity. Basic and acidic residues-rich tracts occupy residues 120 to 163 (ELVR…EERA) and 171 to 229 (AEKK…ERRR). Residues 278–293 (ATGSGTGARAAAPSAP) are compositionally biased toward low complexity. The span at 313 to 323 (TTKKKEIKTRG) shows a compositional bias: basic and acidic residues. The region spanning 443-612 (SRAPVVTVMG…LLQAEVLELK (170 aa)) is the tr-type G domain. Residues 452 to 459 (GHVDHGKT) are G1. 452–459 (GHVDHGKT) is a binding site for GTP. The segment at 477–481 (GITQH) is G2. The segment at 498 to 501 (DTPG) is G3. Residues 498–502 (DTPGH) and 552–555 (TKAD) each bind GTP. A G4 region spans residues 552-555 (TKAD). Residues 588–590 (SSK) are G5.

It belongs to the TRAFAC class translation factor GTPase superfamily. Classic translation factor GTPase family. IF-2 subfamily.

Its subcellular location is the cytoplasm. Its function is as follows. One of the essential components for the initiation of protein synthesis. Protects formylmethionyl-tRNA from spontaneous hydrolysis and promotes its binding to the 30S ribosomal subunits. Also involved in the hydrolysis of GTP during the formation of the 70S ribosomal complex. This chain is Translation initiation factor IF-2, found in Acidovorax sp. (strain JS42).